The sequence spans 353 residues: MRKIIHVDMDCFFAAVEMRDDPSLRDIPLAIGGSADRRGVISTANYPARRYGVHSAMSTAMALKLCPHLKLLPGRMAAYKEASQHIREIFARYTPLIEPLSLDEAYLDVTDCSQCNGSATLIAEQIRQTISDELNLTASAGIAPIKFLAKIASELNKPNGQYVITPAQVPAFLQQLPLSKIPGVGKVTAKRLEEVGLITCADVQQYDLAALLKRFGKFGRVLWERCQGIDLREVSPERLRKSVGVERTLAEDIHDWEDCEALIVDKLYPELELRLRKVKPDLHIARQGVKLKFQDFQQTTQEHVWPVLNKDDLINVARQVWRERREGRGVRLVGLHVTLLDPQLERQLLLPWE.

The region spanning 4-185 (IIHVDMDCFF…LPLSKIPGVG (182 aa)) is the UmuC domain. Mg(2+) contacts are provided by aspartate 8 and aspartate 103. Glutamate 104 is an active-site residue.

The protein belongs to the DNA polymerase type-Y family. Monomer. Mg(2+) is required as a cofactor.

Its subcellular location is the cytoplasm. It carries out the reaction DNA(n) + a 2'-deoxyribonucleoside 5'-triphosphate = DNA(n+1) + diphosphate. Its function is as follows. Poorly processive, error-prone DNA polymerase involved in untargeted mutagenesis. Copies undamaged DNA at stalled replication forks, which arise in vivo from mismatched or misaligned primer ends. These misaligned primers can be extended by PolIV. Exhibits no 3'-5' exonuclease (proofreading) activity. May be involved in translesional synthesis, in conjunction with the beta clamp from PolIII. This chain is DNA polymerase IV, found in Serratia proteamaculans (strain 568).